The sequence spans 112 residues: UPF0482 protein SG1468 (112 aa).

The signal sequence occupies residues 1-22; that stretch reads MNTIPTRCLLGGLLALSLLAYA.

Belongs to the UPF0482 family.

This Sodalis glossinidius (strain morsitans) protein is UPF0482 protein SG1468.